The sequence spans 514 residues: MELAELEQALRRVPGSRGGWELEQLRPEGRGPTTADTPSWSSLGGPKHQEMSFLEQGESRSWPSRAVTTSSERSHGDQGNKASRWTRQEDVEEGGPPGPREGPQSRPVAESTGQEATFPKATPLAQAAPLAEVDNPPTERDILPSDCAASASDSNTDHLDLGIEFSASAASGDELGLVEEKPAPCPSPEVLLPRLGWDDELQKPGAQVYMHFMQEHTCYDAMATSSKLVIFDTMLEIKKAFFALVANGVRAAPLWDSKKQSFVGMLTITDFILVLHRYYRSPLVQIYEIEEHKIETWREIYLQGCFKPLVSISPNDSLFEAVYALIKNRIHRLPVLDPVSGAVLHILTHKRLLKFLHIFGTLLPRPSFLYRTIQDLGIGTFRDLAVVLETAPILTALDIFVDRRVSALPVVNETGQVVGLYSRFDVIHLAAQQTYNHLDMNVGEALRQRTLCLEGVLSCQPHETLGEVIDRIVREQVHRLVLVDETQHLLGVVSLSDILQALVLSPAGIDALGA.

Disordered stretches follow at residues 1–121 (MELA…FPKA) and 134–155 (DNPP…SDSN). Positions 59-71 (SRSWPSRAVTTSS) are enriched in polar residues. CBS domains are found at residues 222–283 (MATS…RSPL), 305–363 (CFKP…GTLL), and 380–440 (TFRD…HLDM). Residues arginine 250, 265–270 (MLTITD), valine 310, 331–332 (HR), and lysine 350 contribute to the ADP site. Residues arginine 250, 265-270 (MLTITD), valine 310, histidine 331, 331-332 (HR), lysine 350, threonine 380, alanine 385, 406-407 (SA), 422-425 (SRFD), arginine 449, leucine 457, histidine 478, 478-479 (HR), and 494-497 (SLSD) contribute to the AMP site. ATP contacts are provided by residues arginine 250, 265–270 (MLTITD), valine 310, 331–332 (HR), arginine 332, and lysine 350. The AMPK pseudosubstrate signature appears at 318–339 (LFEAVYALIKNRIHRLPVLDPV). ADP is bound by residues 422 to 425 (SRFD), arginine 449, leucine 457, and 478 to 479 (HR). Residues 422 to 425 (SRFD), arginine 449, leucine 457, and 478 to 479 (HR) each bind ATP. Positions 452-511 (CLEGVLSCQPHETLGEVIDRIVREQVHRLVLVDETQHLLGVVSLSDILQALVLSPAGIDA) constitute a CBS 4 domain.

This sequence belongs to the 5'-AMP-activated protein kinase gamma subunit family. In terms of assembly, AMPK is a heterotrimer of an alpha catalytic subunit (PRKAA1 or PRKAA2), a beta (PRKAB1 or PRKAB2) and a gamma non-catalytic subunits (PRKAG1, PRKAG2 or PRKAG3). Interacts with FNIP1 and FNIP2. In terms of processing, phosphorylated by ULK1; leading to negatively regulate AMPK activity and suggesting the existence of a regulatory feedback loop between ULK1 and AMPK. Glycosylated; O-GlcNAcylated by OGT, promoting the AMP-activated protein kinase (AMPK) activity. Muscle.

In terms of biological role, AMP/ATP-binding subunit of AMP-activated protein kinase (AMPK), an energy sensor protein kinase that plays a key role in regulating cellular energy metabolism. In response to reduction of intracellular ATP levels, AMPK activates energy-producing pathways and inhibits energy-consuming processes: inhibits protein, carbohydrate and lipid biosynthesis, as well as cell growth and proliferation. AMPK acts via direct phosphorylation of metabolic enzymes, and by longer-term effects via phosphorylation of transcription regulators. AMPK also acts as a regulator of cellular polarity by remodeling the actin cytoskeleton; probably by indirectly activating myosin. The AMPK gamma3 subunit is a non-catalytic subunit with a regulatory role in muscle energy metabolism. It mediates binding to AMP, ADP and ATP, leading to AMPK activation or inhibition: AMP-binding results in allosteric activation of alpha catalytic subunit (PRKAA1 or PRKAA2) both by inducing phosphorylation and preventing dephosphorylation of catalytic subunits. ADP also stimulates phosphorylation, without stimulating already phosphorylated catalytic subunit. ATP promotes dephosphorylation of catalytic subunit, rendering the AMPK enzyme inactive. The polypeptide is 5'-AMP-activated protein kinase subunit gamma-3 (PRKAG3) (Sus scrofa (Pig)).